Reading from the N-terminus, the 273-residue chain is ATP synthase subunit a (273 aa).

7 helical membrane-spanning segments follow: residues 41-61 (ILNI…LLIF), 101-121 (LIAP…LMDL), 122-142 (LAVD…ALRV), 143-163 (VPSA…ILII), 183-203 (PFNH…SLLS), 221-241 (LVFI…ISVP), and 247-267 (IIVI…YIAM).

It belongs to the ATPase A chain family. As to quaternary structure, F-type ATPases have 2 components, CF(1) - the catalytic core - and CF(0) - the membrane proton channel. CF(1) has five subunits: alpha(3), beta(3), gamma(1), delta(1), epsilon(1). CF(0) has three main subunits: a(1), b(2) and c(9-12). The alpha and beta chains form an alternating ring which encloses part of the gamma chain. CF(1) is attached to CF(0) by a central stalk formed by the gamma and epsilon chains, while a peripheral stalk is formed by the delta and b chains.

The protein localises to the cell membrane. Key component of the proton channel; it plays a direct role in the translocation of protons across the membrane. This chain is ATP synthase subunit a, found in Baumannia cicadellinicola subsp. Homalodisca coagulata.